A 2136-amino-acid polypeptide reads, in one-letter code: U5 small nuclear ribonucleoprotein 200 kDa helicase (2136 aa).

Phosphoserine is present on residues Ser-17 and Ser-26. The disordered stretch occupies residues 39–81; sequence EVLSLVGKLEGTRMGDKAQRTKPQMQEERRAKRRKRDEDRHDM. Lys-46 participates in a covalent cross-link: Glycyl lysine isopeptide (Lys-Gly) (interchain with G-Cter in SUMO2). A compositionally biased stretch (basic and acidic residues) spans 48–81; it reads EGTRMGDKAQRTKPQMQEERRAKRRKRDEDRHDM. The stretch at 54 to 84 forms a coiled coil; the sequence is DKAQRTKPQMQEERRAKRRKRDEDRHDMNKM. The residue at position 225 (Ser-225) is a Phosphoserine. Thr-389 carries the post-translational modification Phosphothreonine. The tract at residues 395 to 2129 is interaction with C9orf78 and WBP4; that stretch reads DLDQGGEALA…YKFSVDVKEA (1735 aa). One can recognise a Helicase ATP-binding 1 domain in the interval 490 to 673; sequence RAALETDENL…FLRVDPAKGL (184 aa). 503-510 lines the ATP pocket; the sequence is APTGAGKT. The DEAH box motif lies at 615–618; it reads DEIH. Residues 684-921 enclose the Helicase C-terminal 1 domain; the sequence is PLEQTYVGIT…NAKDAVNWLG (238 aa). Residue Tyr-709 is modified to Phosphotyrosine. A Glycyl lysine isopeptide (Lys-Gly) (interchain with G-Cter in SUMO) cross-link involves residue Lys-944. The residue at position 971 (Lys-971) is an N6-acetyllysine; alternate. A Glycyl lysine isopeptide (Lys-Gly) (interchain with G-Cter in SUMO); alternate cross-link involves residue Lys-971. Positions 982–1286 constitute an SEC63 1 domain; it reads TELGRIASHY…SCETQLPVSF (305 aa). Glycyl lysine isopeptide (Lys-Gly) (interchain with G-Cter in SUMO) cross-links involve residues Lys-1071 and Lys-1199. The segment at 1282–2136 is interaction with TSSC4; it reads LPVSFRHLIL…KEAETDSDSD (855 aa). One can recognise a Helicase ATP-binding 2 domain in the interval 1337–1512; it reads NTVYNSDDNV…WLGCSATSTF (176 aa). An ATP-binding site is contributed by 1350 to 1357; the sequence is APTGSGKT. Residue Thr-1428 is modified to Phosphothreonine. Residues 1454–1457 carry the DEAH box motif; sequence DEVH. The Helicase C-terminal 2 domain occupies 1545–1753; it reads PVYHAITKHS…TIENKQDAVD (209 aa). Phosphothreonine is present on Thr-1765. In terms of domain architecture, SEC63 2 spans 1812-2124; the sequence is PLNLGMIAAY…GCDQEYKFSV (313 aa). A Phosphoserine modification is found at Ser-2002. Lys-2091 participates in a covalent cross-link: Glycyl lysine isopeptide (Lys-Gly) (interchain with G-Cter in SUMO). Phosphothreonine is present on Thr-2131. Phosphoserine is present on residues Ser-2133 and Ser-2135.

The protein belongs to the helicase family. SKI2 subfamily. Component of a core complex containing at least PRPF8, SNRNP200, EFTUD2 and SNRNP40. Component of the U5 snRNP and U4/U6-U5 tri-snRNP complexes, building blocks of the spliceosome. Component of the U4/U6-U5 tri-snRNP complex composed of the U4, U6 and U5 snRNAs and at least PRPF3, PRPF4, PRPF6, PRPF8, PRPF31, SNRNP200, TXNL4A, SNRNP40, DDX23, CD2BP2, PPIH, SNU13, EFTUD2, SART1 and USP39. Component of precatalytic, catalytic and postcatalytic spliceosomal complexes. Component of the minor spliceosome, which splices U12-type introns. Interacts with C9orf78; the interaction is direct and mutually exclusive with its interaction with WBP4. Interacts with WBP4; the interaction is mutually exclusive with its interaction with C9orf78. Interacts with PRPF8. Interacts with TSSC4; the interaction is direct, excludes recruitment of C9ORF78 and WBP4 to SNRNP200 and negatively regulates its RNA helicase activity.

The protein resides in the nucleus. The catalysed reaction is ATP + H2O = ADP + phosphate + H(+). Its function is as follows. Catalyzes the ATP-dependent unwinding of U4/U6 RNA duplices, an essential step in the assembly of a catalytically active spliceosome. Plays a role in pre-mRNA splicing as core component of precatalytic, catalytic and postcatalytic spliceosomal complexes. As a component of the minor spliceosome, involved in the splicing of U12-type introns in pre-mRNAs. Involved in spliceosome assembly, activation and disassembly. Mediates changes in the dynamic network of RNA-RNA interactions in the spliceosome. The protein is U5 small nuclear ribonucleoprotein 200 kDa helicase (Snrnp200) of Mus musculus (Mouse).